The sequence spans 195 residues: Imidazoleglycerol-phosphate dehydratase (195 aa).

This sequence belongs to the imidazoleglycerol-phosphate dehydratase family.

The protein localises to the cytoplasm. It carries out the reaction D-erythro-1-(imidazol-4-yl)glycerol 3-phosphate = 3-(imidazol-4-yl)-2-oxopropyl phosphate + H2O. It functions in the pathway amino-acid biosynthesis; L-histidine biosynthesis; L-histidine from 5-phospho-alpha-D-ribose 1-diphosphate: step 6/9. The protein is Imidazoleglycerol-phosphate dehydratase of Exiguobacterium sp. (strain ATCC BAA-1283 / AT1b).